Consider the following 422-residue polypeptide: Glycerol-3-phosphate dehydrogenase [NAD(+)] 2 (422 aa).

Residues G69 to G74, F157, K180, and A213 each bind NAD(+). Position 180 (K180) interacts with substrate. K273 acts as the Proton acceptor in catalysis. NAD(+) contacts are provided by R338 and Q367. R338–N339 contacts substrate.

Belongs to the NAD-dependent glycerol-3-phosphate dehydrogenase family.

The enzyme catalyses sn-glycerol 3-phosphate + NAD(+) = dihydroxyacetone phosphate + NADH + H(+). This Candida glabrata (strain ATCC 2001 / BCRC 20586 / JCM 3761 / NBRC 0622 / NRRL Y-65 / CBS 138) (Yeast) protein is Glycerol-3-phosphate dehydrogenase [NAD(+)] 2 (GPD2).